The sequence spans 318 residues: Myoblast determination protein 1 (318 aa).

M1 participates in a covalent cross-link: Peptide (Met-Gly) (interchain with G-Cter in ubiquitin). Residue K104 is modified to N6-methyllysine; by EHMT2. The region spanning 109–160 is the bHLH domain; the sequence is DRRKAATMRERRRLSKVNEAFETLKRCTSSNPNQRLPKVEILRNAIRYIEGL. Disordered stretches follow at residues 175 to 224 and 262 to 318; these read AAFY…RQNG and SPAA…YQVL. Residues 196–206 show a composition bias toward polar residues; sequence SDASSPRSNCS. A compositionally biased stretch (low complexity) spans 262–271; sequence SPAAPSLLLP. Pro residues predominate over residues 272-282; the sequence is DAPPESPPGPP. A compositionally biased stretch (polar residues) spans 290-304; that stretch reads AEQGTQTPSPDSTPQ.

As to quaternary structure, efficient DNA binding requires dimerization with another bHLH protein. Seems to form active heterodimers with ITF-2. Interacts with SUV39H1. Interacts with DDX5. Interacts with CHD2. Interacts with TSC22D3. Interacts with SETD3. Interacts with P-TEFB complex; promotes the transcriptional activity of MYOD1 through its CDK9-mediated phosphorylation. Interacts with CSRP3. Interacts with NUPR1. Post-translationally, phosphorylated by CDK9. This phosphorylation promotes its function in muscle differentiation. In terms of processing, acetylated by a complex containing EP300 and PCAF. The acetylation is essential to activate target genes. Conversely, its deacetylation by SIRT1 inhibits its function. Ubiquitinated on the N-terminus; which is required for proteasomal degradation. Post-translationally, methylation at Lys-104 by EHMT2/G9a inhibits myogenic activity.

It is found in the nucleus. Acts as a transcriptional activator that promotes transcription of muscle-specific target genes and plays a role in muscle differentiation. Together with MYF5 and MYOG, co-occupies muscle-specific gene promoter core region during myogenesis. Induces fibroblasts to differentiate into myoblasts. Interacts with and is inhibited by the twist protein. This interaction probably involves the basic domains of both proteins. The polypeptide is Myoblast determination protein 1 (Myod1) (Rattus norvegicus (Rat)).